Here is a 748-residue protein sequence, read N- to C-terminus: 5-methyltetrahydropteroyltriglutamate--homocysteine methyltransferase (748 aa).

Residues 18-21 (REWK) and lysine 112 each bind 5-methyltetrahydropteroyltri-L-glutamate. L-homocysteine is bound by residues 420–422 (IGS) and glutamate 473. L-methionine contacts are provided by residues 420 to 422 (IGS) and glutamate 473. Tryptophan 550 contributes to the 5-methyltetrahydropteroyltri-L-glutamate binding site. Aspartate 588 serves as a coordination point for L-homocysteine. Residue aspartate 588 coordinates L-methionine. 5-methyltetrahydropteroyltri-L-glutamate is bound at residue glutamate 594. Positions 630, 632, and 654 each coordinate Zn(2+). The active-site Proton donor is the histidine 683. Residue cysteine 715 coordinates Zn(2+).

Belongs to the vitamin-B12 independent methionine synthase family. The cofactor is Zn(2+).

The enzyme catalyses 5-methyltetrahydropteroyltri-L-glutamate + L-homocysteine = tetrahydropteroyltri-L-glutamate + L-methionine. It functions in the pathway amino-acid biosynthesis; L-methionine biosynthesis via de novo pathway; L-methionine from L-homocysteine (MetE route): step 1/1. In terms of biological role, catalyzes the transfer of a methyl group from 5-methyltetrahydrofolate to homocysteine resulting in methionine formation. In Staphylococcus epidermidis (strain ATCC 12228 / FDA PCI 1200), this protein is 5-methyltetrahydropteroyltriglutamate--homocysteine methyltransferase.